A 696-amino-acid polypeptide reads, in one-letter code: Equisetin cluster transcription factor eqxF (696 aa).

Disordered regions lie at residues 1–24 (MADQVQDVHPMEWGPGKTPQGRAR) and 73–117 (NQEQ…PADY).

It is found in the nucleus. Transcription factor that regulates the expression of the gene cluster that mediates the biosynthesis of Equisetin. The protein is Equisetin cluster transcription factor eqxF of Fusarium heterosporum.